The sequence spans 767 residues: Photosystem I P700 chlorophyll a apoprotein A1 (767 aa).

Residues 1-22 form a disordered region; it reads MTISPPESGEKNKKVLEDPVKA. Over residues 8–22 the composition is skewed to basic and acidic residues; it reads SGEKNKKVLEDPVKA. A run of 8 helical transmembrane segments spans residues 76 to 99, 162 to 185, 201 to 225, 309 to 327, 368 to 391, 407 to 433, 455 to 477, and 558 to 576; these read IFSAHFGHLAVIFIWMSAAFFHGA, LMALAIGAVVMAALMLHAGIFHYH, LNHHIAGLVGLGSLAWAGHCIHIGA, VSHHHLAFGVIAIIGGHMY, RHAQLAVNLAMLGSISILVSHHMY, LGLFTHHMWIGGLFIVGAGAHAGIAMV, ALISHLNWVCMWLGFHSFGLYIH, and LMIHHIHAFQIHVTVLILL. Positions 600 and 609 each coordinate [4Fe-4S] cluster. The next 2 membrane-spanning stretches (helical) occupy residues 616 to 637 and 681 to 703; these read HVFLALFWMYNCLSIVIFHFSW and ISMYGLMFLGAHFIWAFSLMFLF. A divinylchlorophyll a'-binding site is contributed by His-692. The divinyl chlorophyll a site is built by Met-700 and Tyr-708. Trp-709 provides a ligand contact to phylloquinone. The helical transmembrane segment at 741 to 761 threads the bilayer; that stretch reads AVGVTHFLVGGIATTWAFFHA.

This sequence belongs to the PsaA/PsaB family. As to quaternary structure, the PsaA/B heterodimer binds the P700 divinyl chlorophyll special pair and subsequent electron acceptors. PSI consists of a core antenna complex that captures photons, and an electron transfer chain that converts photonic excitation into a charge separation. The cyanobacterial PSI reaction center is composed of one copy each of PsaA,B,C,D,E,F,I,J,K,L,M and X, and forms trimeric complexes. Requires PSI electron transfer chain: 5 divinyl chlorophyll a, 1 divinyl chlorophyll a', 2 phylloquinones and 3 4Fe-4S clusters. PSI core antenna: 90 divinyl chlorophyll a, 22 carotenoids, 3 phospholipids and 1 galactolipid. P700 is a divinyl chlorophyll a/divinyl chlorophyll a' dimer, A0 is one or more divinyl chlorophyll a, A1 is one or both phylloquinones and FX is a shared 4Fe-4S iron-sulfur center. as cofactor.

The protein localises to the cellular thylakoid membrane. The catalysed reaction is reduced [plastocyanin] + hnu + oxidized [2Fe-2S]-[ferredoxin] = oxidized [plastocyanin] + reduced [2Fe-2S]-[ferredoxin]. Its function is as follows. PsaA and PsaB bind P700, the primary electron donor of photosystem I (PSI), as well as the electron acceptors A0, A1 and FX. PSI is a plastocyanin/cytochrome c6-ferredoxin oxidoreductase, converting photonic excitation into a charge separation, which transfers an electron from the donor P700 chlorophyll pair to the spectroscopically characterized acceptors A0, A1, FX, FA and FB in turn. Oxidized P700 is reduced on the lumenal side of the thylakoid membrane by plastocyanin or cytochrome c6. This Prochlorococcus marinus (strain MIT 9301) protein is Photosystem I P700 chlorophyll a apoprotein A1.